The chain runs to 213 residues: Elongation factor 1-beta (213 aa).

A compositionally biased stretch (low complexity) spans 67–80 (AGKAPAASGSAAAA). Residues 67-88 (AGKAPAASGSAAAAAEEEDDED) are disordered.

Belongs to the EF-1-beta/EF-1-delta family. In terms of assembly, EF-1 is composed of 4 subunits: alpha, beta, delta, and gamma.

EF-1-beta and EF-1-delta stimulate the exchange of GDP bound to EF-1-alpha to GTP. In Candida albicans (strain WO-1) (Yeast), this protein is Elongation factor 1-beta (EFB1).